A 400-amino-acid polypeptide reads, in one-letter code: Zinc finger protein 514 (400 aa).

Residues 1–72 enclose the KRAB domain; the sequence is MTFEDVAVEF…EREISTGAHS (72 aa). 7 consecutive C2H2-type zinc fingers follow at residues 204-226, 232-254, 260-282, 288-310, 316-338, 344-366, and 372-394; these read CKCN…QRCH, YECS…QRTH, YECS…YRFH, YKCN…QRTH, YECR…YRFH, YKCN…YRFH, and YKCN…QRSH.

The protein belongs to the krueppel C2H2-type zinc-finger protein family.

Its subcellular location is the nucleus. Its function is as follows. May be involved in transcriptional regulation. This chain is Zinc finger protein 514 (ZNF514), found in Homo sapiens (Human).